The primary structure comprises 426 residues: Eukaryotic translation initiation factor 3 subunit M (426 aa).

The PCI domain occupies 179 to 350; it reads DDEDSYRYLI…KVFLVHRTTY (172 aa). The segment covering 385–401 has biased composition (basic and acidic residues); that stretch reads DVEGQREREQQELERKL. The segment at 385–426 is disordered; the sequence is DVEGQREREQQELERKLAGAGMGGGPGGDRRRQQKPRTDEDD.

This sequence belongs to the eIF-3 subunit M family. In terms of assembly, component of the eukaryotic translation initiation factor 3 (eIF-3) complex.

The protein resides in the cytoplasm. Functionally, component of the eukaryotic translation initiation factor 3 (eIF-3) complex, which is involved in protein synthesis of a specialized repertoire of mRNAs and, together with other initiation factors, stimulates binding of mRNA and methionyl-tRNAi to the 40S ribosome. The eIF-3 complex specifically targets and initiates translation of a subset of mRNAs involved in cell proliferation. The polypeptide is Eukaryotic translation initiation factor 3 subunit M (Chaetomium globosum (strain ATCC 6205 / CBS 148.51 / DSM 1962 / NBRC 6347 / NRRL 1970) (Soil fungus)).